A 110-amino-acid chain; its full sequence is Ribonuclease P protein component (110 aa).

This sequence belongs to the RnpA family. Consists of a catalytic RNA component (M1 or rnpB) and a protein subunit.

It catalyses the reaction Endonucleolytic cleavage of RNA, removing 5'-extranucleotides from tRNA precursor.. Functionally, RNaseP catalyzes the removal of the 5'-leader sequence from pre-tRNA to produce the mature 5'-terminus. It can also cleave other RNA substrates such as 4.5S RNA. The protein component plays an auxiliary but essential role in vivo by binding to the 5'-leader sequence and broadening the substrate specificity of the ribozyme. The polypeptide is Ribonuclease P protein component (Mesoplasma florum (strain ATCC 33453 / NBRC 100688 / NCTC 11704 / L1) (Acholeplasma florum)).